The sequence spans 89 residues: Small ribosomal subunit protein uS15 (89 aa).

It belongs to the universal ribosomal protein uS15 family. As to quaternary structure, part of the 30S ribosomal subunit. Forms a bridge to the 50S subunit in the 70S ribosome, contacting the 23S rRNA.

Its function is as follows. One of the primary rRNA binding proteins, it binds directly to 16S rRNA where it helps nucleate assembly of the platform of the 30S subunit by binding and bridging several RNA helices of the 16S rRNA. Functionally, forms an intersubunit bridge (bridge B4) with the 23S rRNA of the 50S subunit in the ribosome. The sequence is that of Small ribosomal subunit protein uS15 from Synechococcus elongatus (strain ATCC 33912 / PCC 7942 / FACHB-805) (Anacystis nidulans R2).